Reading from the N-terminus, the 92-residue chain is Putative regulatory protein Tpet_0986 (92 aa).

This sequence belongs to the RemA family.

The sequence is that of Putative regulatory protein Tpet_0986 from Thermotoga petrophila (strain ATCC BAA-488 / DSM 13995 / JCM 10881 / RKU-1).